The primary structure comprises 424 residues: ATP-dependent RNA helicase WM6 (424 aa).

Over residues 1-16 (MADNDDLLDYEDEEQT) the composition is skewed to acidic residues. Positions 1–27 (MADNDDLLDYEDEEQTETTAVENQEAP) are disordered. The Q motif motif lies at 41-69 (SGFRDFLLKPEILRAIVDCGFEHPSEVQH). Positions 72–246 (IPQAVLGMDI…KKFMQDPMEV (175 aa)) constitute a Helicase ATP-binding domain. Position 85-92 (85-92 (AKSGMGKT)) interacts with ATP. The DECD box signature appears at 193 to 196 (DECD). In terms of domain architecture, Helicase C-terminal spans 258 to 419 (GLQQHYVNLK…ELPEEIDLST (162 aa)).

The protein belongs to the DEAD box helicase family. DECD subfamily. Component of the spliceosome. Interacts with the exon junction complex.

It is found in the nucleus speckle. It catalyses the reaction ATP + H2O = ADP + phosphate + H(+). Functionally, required for mRNA export out of the nucleus. Probable RNA helicase that may regulate entry into mitosis by down-regulating the expression of other genes whose activity may be rate-limiting for entry into mitosis during embryogenesis. Binds to salivary gland chromosomes and modifies position effect variegation. Promotes an open chromatin structure that favors transcription during development by regulating the spread of heterochromatin. This chain is ATP-dependent RNA helicase WM6 (Hel25E), found in Drosophila melanogaster (Fruit fly).